Reading from the N-terminus, the 335-residue chain is Pro-cathepsin H (335 aa).

The N-terminal stretch at 1 to 22 is a signal peptide; it reads MWAVLPLLCAGAWLLGAPACGA. A propeptide spans 23–97 (activation peptide); the sequence is AELAANSLEK…DELKRKYLWS (75 aa). Residues Asn72 and Asn101 are each glycosylated (N-linked (GlcNAc...) asparagine). Disulfide bonds link Cys102–Cys327, Cys138–Cys181, Cys172–Cys214, and Cys272–Cys322. A propeptide spanning residues 106 to 115 is cleaved from the precursor; that stretch reads KSNYLRGTGP. Residue Cys141 is part of the active site. Asn230 is a glycosylation site (N-linked (GlcNAc...) asparagine). Catalysis depends on residues His281 and Asn301.

The protein belongs to the peptidase C1 family. As to quaternary structure, composed of a mini chain and a large chain. The large chain may be split into heavy and light chain. All chains are held together by disulfide bonds.

Its subcellular location is the lysosome. The enzyme catalyses Hydrolysis of proteins, acting as an aminopeptidase (notably, cleaving Arg-|-Xaa bonds) as well as an endopeptidase.. Functionally, important for the overall degradation of proteins in lysosomes. The chain is Pro-cathepsin H (CTSH) from Bos taurus (Bovine).